Consider the following 711-residue polypeptide: Arginine decarboxylase 2 (711 aa).

Lys-147 bears the N6-(pyridoxal phosphate)lysine mark. Residue 331 to 341 coordinates substrate; it reads IDIGGGLGIDY. Positions 642 to 661 are disordered; that stretch reads MHTKGGSEGENEEEEEDDEF. The span at 650–661 shows a compositional bias: acidic residues; it reads GENEEEEEDDEF.

This sequence belongs to the Orn/Lys/Arg decarboxylase class-II family. SpeA subfamily. Homodimer and heterodimer with ADC1. Pyridoxal 5'-phosphate is required as a cofactor. The cofactor is Mg(2+).

It is found in the plastid. The protein resides in the chloroplast. Its subcellular location is the cytoplasm. It localises to the cytosol. It carries out the reaction L-arginine + H(+) = agmatine + CO2. It participates in amine and polyamine biosynthesis; agmatine biosynthesis; agmatine from L-arginine: step 1/1. In terms of biological role, required for the biosynthesis of putrescine. Catalyzes the first step of polyamine (PA) biosynthesis to produce putrescine from arginine. Is a major contributor to basal arginine decarboxylase (ADC) activity and putrescine biosynthesis. Accumulation of putrescine plays a positive role in salt stress tolerance. Accumulation of putrescine plays a positive role in freezing tolerance. Production of PA is essential for normal seed development. Controls PA homeostasis which is crucial for normal plant growth and development. This is Arginine decarboxylase 2 from Arabidopsis thaliana (Mouse-ear cress).